The primary structure comprises 165 residues: Destrin (165 aa).

A2 carries the N-acetylalanine modification. Residues 4–153 (GVQVADEVCR…NRACIAEKLG (150 aa)) enclose the ADF-H domain. Positions 30–34 (KKRKK) match the Nuclear localization signal motif.

Belongs to the actin-binding proteins ADF family.

Actin-depolymerizing protein. Severs actin filaments (F-actin) and binds to actin monomers (G-actin). Acts in a pH-independent manner. This Gallus gallus (Chicken) protein is Destrin (DSTN).